Here is a 127-residue protein sequence, read N- to C-terminus: Protein B20 (127 aa).

Positions 86-127 are disordered; the sequence is DRTGMNSESDSESDNISIKTEYENEYEFYDETQDQSTQHNDL. Residues 108 to 118 show a composition bias toward acidic residues; the sequence is ENEYEFYDETQ.

This chain is Protein B20, found in Homo sapiens (Human).